The sequence spans 201 residues: Recombination protein RecR (201 aa).

A C4-type zinc finger spans residues 57–72; that stretch reads CADCRTFTEQEHCTIC. Residues 81–176 enclose the Toprim domain; the sequence is GQICVVESPA…LASRIAHGVP (96 aa).

The protein belongs to the RecR family.

In terms of biological role, may play a role in DNA repair. It seems to be involved in an RecBC-independent recombinational process of DNA repair. It may act with RecF and RecO. This Yersinia enterocolitica serotype O:8 / biotype 1B (strain NCTC 13174 / 8081) protein is Recombination protein RecR.